The chain runs to 68 residues: Conotoxin Lt5.2 (68 aa).

The signal sequence occupies residues M1–P19. Residues K20–A54 constitute a propeptide that is removed on maturation.

Belongs to the conotoxin T superfamily. Contains 2 disulfide bonds that can be either 'C1-C3, C2-C4' or 'C1-C4, C2-C3', since these disulfide connectivities have been observed for conotoxins with cysteine framework V (for examples, see AC P0DQQ7 and AC P81755). Expressed by the venom duct.

Its subcellular location is the secreted. This chain is Conotoxin Lt5.2, found in Conus litteratus (Lettered cone).